The chain runs to 594 residues: Potassium-transporting ATPase potassium-binding subunit (594 aa).

The next 10 helical transmembrane spans lie at 3-23, 67-87, 136-156, 179-199, 287-307, 314-334, 415-435, 453-473, 519-539, and 562-582; these read ADFL…APLL, AVAM…LQRL, ALTV…IALV, LYVL…QGVV, LEML…GEMV, VAIL…AAYF, GLYG…LMIG, VALV…VAVL, VLLG…ILAL, and LFVA…YVPA.

This sequence belongs to the KdpA family. In terms of assembly, the system is composed of three essential subunits: KdpA, KdpB and KdpC.

Its subcellular location is the cell inner membrane. Part of the high-affinity ATP-driven potassium transport (or Kdp) system, which catalyzes the hydrolysis of ATP coupled with the electrogenic transport of potassium into the cytoplasm. This subunit binds the periplasmic potassium ions and delivers the ions to the membrane domain of KdpB through an intramembrane tunnel. The chain is Potassium-transporting ATPase potassium-binding subunit from Bordetella pertussis (strain Tohama I / ATCC BAA-589 / NCTC 13251).